Here is a 187-residue protein sequence, read N- to C-terminus: Corticoliberin (187 aa).

A signal peptide spans 1-24 (MRLRLLVSAGMLLVALSPCLPCRA). The propeptide occupies 25 to 144 (LLSRGSVSGA…HQGALERERR (120 aa)). The disordered stretch occupies residues 75–95 (AARLSPNSTPLTAGRGSRPSH). An Isoleucine amide modification is found at Ile-185.

The protein belongs to the sauvagine/corticotropin-releasing factor/urotensin I family. Interacts (via C-terminus) with CRFR1 (via N-terminal extracellular domain). Produced by the hypothalamus.

It localises to the secreted. Functionally, hormone regulating the release of corticotropin from pituitary gland. Induces NLRP6 in intestinal epithelial cells, hence may influence gut microbiota profile. This Rattus norvegicus (Rat) protein is Corticoliberin (Crh).